The sequence spans 107 residues: UPF0122 protein BLi01817/BL02321 (107 aa).

This sequence belongs to the UPF0122 family.

Functionally, might take part in the signal recognition particle (SRP) pathway. This is inferred from the conservation of its genetic proximity to ftsY/ffh. May be a regulatory protein. The polypeptide is UPF0122 protein BLi01817/BL02321 (Bacillus licheniformis (strain ATCC 14580 / DSM 13 / JCM 2505 / CCUG 7422 / NBRC 12200 / NCIMB 9375 / NCTC 10341 / NRRL NRS-1264 / Gibson 46)).